A 1116-amino-acid polypeptide reads, in one-letter code: cGMP-specific 3',5'-cyclic phosphodiesterase (1116 aa).

Disordered stretches follow at residues 1 to 36 (MTDV…NGAA) and 82 to 136 (KSEC…ATQQ). The span at 15–28 (VSSTSSEVAVETTS) shows a compositional bias: low complexity. A compositionally biased stretch (polar residues) spans 86–136 (HSQSNNNQHVETAPSKQSSDSEASAPTTVSIPSANAKINSSSSGKTTATQQ). GAF domains lie at 241 to 393 (DIDV…GIGI) and 425 to 611 (NLEC…GLGI). A PDEase domain is found at 641 to 964 (SQDQTEKLAQ…RNWQDLAEKV (324 aa)). His-717 (proton donor) is an active-site residue. Positions 721, 757, 758, and 868 each coordinate a divalent metal cation. Disordered stretches follow at residues 1005-1031 (QHGG…LSIK) and 1067-1116 (HVSE…CALL). 2 stretches are compositionally biased toward basic and acidic residues: residues 1014 to 1023 (EDTHTPEHQR) and 1067 to 1076 (HVSEDMDDKS). Positions 1085–1103 (SGSVGRMSASSSTSSAGTV) are enriched in low complexity. Basic residues predominate over residues 1106–1116 (SKKRSKLCALL). Cys-1113 carries the cysteine methyl ester modification. Cys-1113 is lipidated: S-farnesyl cysteine. A propeptide spans 1114–1116 (ALL) (removed in mature form).

It belongs to the cyclic nucleotide phosphodiesterase family. As to quaternary structure, interacts with PrBP. A divalent metal cation serves as cofactor.

It localises to the cell membrane. The catalysed reaction is 3',5'-cyclic GMP + H2O = GMP + H(+). Has a role regulating cGMP transport in Malpighian tubule principal cells. In Drosophila mojavensis (Fruit fly), this protein is cGMP-specific 3',5'-cyclic phosphodiesterase.